The sequence spans 243 residues: MSKLFIPYIMGDLNFIHHLKTLTENGADIVEIGVPFSDPVADGPIIMKAGRNAIDEGSNIKFIFDELIKNKNTISSKYVLMTYYNILSAYGEELFLDKCDEAGVYGLIIPDLPYELTKKFKKDFYHHSVKIISLIAMTASDARIMQIAKNSEGFIYTVTMNATTGNSGEFHPDLKRKIEYIKKVSKIPVVAGFGIKNPEHVKDIASVADGIVIGSEIVKRIEIDSRKEFITYIKSIRTTLNSL.

Residues Glu-31 and Asp-42 each act as proton acceptor in the active site.

It belongs to the TrpA family. Tetramer of two alpha and two beta chains.

The enzyme catalyses (1S,2R)-1-C-(indol-3-yl)glycerol 3-phosphate + L-serine = D-glyceraldehyde 3-phosphate + L-tryptophan + H2O. Its pathway is amino-acid biosynthesis; L-tryptophan biosynthesis; L-tryptophan from chorismate: step 5/5. Its function is as follows. The alpha subunit is responsible for the aldol cleavage of indoleglycerol phosphate to indole and glyceraldehyde 3-phosphate. This is Tryptophan synthase alpha chain from Staphylococcus epidermidis (strain ATCC 35984 / DSM 28319 / BCRC 17069 / CCUG 31568 / BM 3577 / RP62A).